The primary structure comprises 129 residues: Phenazine antibiotic resistance protein EhpR (129 aa).

One can recognise a VOC domain in the interval 10 to 128 (TPNLQLVYVS…DGHIIRVCPL (119 aa)). D-alanylgriseoluteate is bound by residues 42-43 (RY) and W57.

As to quaternary structure, homodimer.

Its function is as follows. Required for resistance to the phenazine antibiotic D-alanylgriseoluteic acid (AGA), an antibiotic produced by E.agglomerans itself, and thus protects the bacterium against phenazine toxicity. Probably binds AGA and acts as a chaperone that works in tandem with a membrane transporter for subsequent antibiotic secretion. This is Phenazine antibiotic resistance protein EhpR from Enterobacter agglomerans (Erwinia herbicola).